The following is a 156-amino-acid chain: 6,7-dimethyl-8-ribityllumazine synthase (156 aa).

5-amino-6-(D-ribitylamino)uracil is bound by residues F22, 56–58 (AFE), and 80–82 (AVV). Position 85 to 86 (85 to 86 (ET)) interacts with (2S)-2-hydroxy-3-oxobutyl phosphate. The active-site Proton donor is the H88. F113 contributes to the 5-amino-6-(D-ribitylamino)uracil binding site. R127 lines the (2S)-2-hydroxy-3-oxobutyl phosphate pocket.

Belongs to the DMRL synthase family.

The enzyme catalyses (2S)-2-hydroxy-3-oxobutyl phosphate + 5-amino-6-(D-ribitylamino)uracil = 6,7-dimethyl-8-(1-D-ribityl)lumazine + phosphate + 2 H2O + H(+). The protein operates within cofactor biosynthesis; riboflavin biosynthesis; riboflavin from 2-hydroxy-3-oxobutyl phosphate and 5-amino-6-(D-ribitylamino)uracil: step 1/2. Functionally, catalyzes the formation of 6,7-dimethyl-8-ribityllumazine by condensation of 5-amino-6-(D-ribitylamino)uracil with 3,4-dihydroxy-2-butanone 4-phosphate. This is the penultimate step in the biosynthesis of riboflavin. The protein is 6,7-dimethyl-8-ribityllumazine synthase of Pediococcus pentosaceus (strain ATCC 25745 / CCUG 21536 / LMG 10740 / 183-1w).